Here is a 1077-residue protein sequence, read N- to C-terminus: Bifunctional helicase and thymine dioxygenase JBP2 (1077 aa).

The tract at residues 1-516 (MPMFMDGASQ…PPLCIPFKIA (516 aa)) is thymine dioxygenase. Fe cation-binding residues include H391, D393, and H441. R455 provides a ligand contact to 2-oxoglutarate. The tract at residues 517–1075 (KTLSLTQHAA…RNIDTVKSER (559 aa)) is DNA Helicase. Positions 531 to 706 (SRRIKEGDGC…YRLVGWVDDK (176 aa)) constitute a Helicase ATP-binding domain. 544 to 551 (LTMGLGKT) serves as a coordination point for ATP. The DEAH box motif lies at 657 to 660 (DEGH). Residues 871–1032 (KLTALISILH…QVVPGHDLVD (162 aa)) form the Helicase C-terminal domain.

The protein in the C-terminal section; belongs to the SNF2/RAD54 helicase family. This sequence in the N-terminal section; belongs to the TET family. JBP2 subfamily. Fe(2+) is required as a cofactor.

The protein localises to the nucleus. The catalysed reaction is ATP + H2O = ADP + phosphate + H(+). It catalyses the reaction thymine + 2-oxoglutarate + O2 = 5-hydroxymethyluracil + succinate + CO2. Dioxygenase that catalyzes the first step of DNA base J (beta-d-glucosyl-HOMedU) biosynthesis by converting thymine to 5-hydroxymethyluracil (HOMedU). DNA base J is a hypermodified thymidine residue found in the genome of kinetoplastid parasites, which is localized primarily to repetitive DNA, namely the telomeres, and is implicated in the regulation of antigenic variation. Probably also acts as a DNA helicase. Recognizes and binds specific regions of the genome, hydrolyzes ATP and allows the DNA base J de novo synthesis. Involved in initial synthesis of DNA base J, JBP1 being able to act via the basal level of DNA base J and propagate further synthesis. In contrast to JBP1, it does not specifically bind DNA base J, however it binds chromatin. The sequence is that of Bifunctional helicase and thymine dioxygenase JBP2 (JBP2) from Trypanosoma brucei brucei (strain 927/4 GUTat10.1).